The primary structure comprises 361 residues: Cytochrome P450 family protein EryCII (361 aa).

Belongs to the cytochrome P450 family. In terms of assembly, heterotetramer composed of EryCII and EryCIII.

Its pathway is antibiotic biosynthesis; erythromycin biosynthesis. Functionally, involved in the erythromycin biosynthesis pathway. Acts by forming a complex and stabilizing the desosaminyl transferase EryCIII. This chain is Cytochrome P450 family protein EryCII (eryCII), found in Saccharopolyspora erythraea (strain ATCC 11635 / DSM 40517 / JCM 4748 / NBRC 13426 / NCIMB 8594 / NRRL 2338).